The sequence spans 229 residues: Choline-phosphate cytidylyltransferase (229 aa).

CDP-choline contacts are provided by L6, A8, G9, Y80, N82, S85, and A101. D102 contributes to the Mg(2+) binding site. CDP-choline is bound at residue Y185. Residues E211 and D213 each coordinate Mg(2+).

It belongs to the LicC/PntC cytidylyltransferase family. Monomer. Forms dimers in LicC-CDP-Cho-Mg(2+) crystals, but the monomer is probably the biologically functional unit. The cofactor is Mg(2+).

The catalysed reaction is phosphocholine + CTP + H(+) = CDP-choline + diphosphate. The protein operates within cell wall biogenesis; teichoic acid biosynthesis. It participates in cell wall biogenesis; lipoteichoic acid biosynthesis. Mg(2+) in slight excess of CTP gives maximal activity. Strongly inhibited by Ca(2+) and several other metal ions, such as Cd(2+), Co(2+), Cu(2+), Mn(2+), Ni(2+), Zn(2+) and Fe(2+). Also inhibited by Mg(2+) at high concentrations. CDP-Cho is a competitive inhibitor with respect to CTP, whereas diphosphate is a mixed-type inhibitor with respect to CTP. In terms of biological role, cytidylyltransferase involved in the biosynthesis of the phosphocholine containing cell wall constituents, teichoic acid and lipoteichoic acid, which are essential for cell separation and pathogenesis. Catalyzes the activation of phosphocholine (P-Cho) to CDP-choline (CDP-Cho). Can also use phosphoethanolamine and 2-aminoethylphosphonate, with much lower efficiency. Shows lower activity with dCTP, weak activity with ATP and no activity with GTP, TTP, UTP, dATP, dGTP and dTTP. The chain is Choline-phosphate cytidylyltransferase from Streptococcus pneumoniae (strain ATCC BAA-255 / R6).